Here is a 189-residue protein sequence, read N- to C-terminus: Phomopsin biosynthesis cluster protein D (189 aa).

It belongs to the oryJ family.

Functionally, part of the gene cluster that mediates the biosynthesis of the phomopsins, a group of hexapeptide mycotoxins which infects lupins and causes lupinosis disease in livestock. The role of phomC within the phomopsins biosynthesis pathway has still to be determined. The pathway starts with the processing of the precursor phomA by several endopeptidases including kexin proteases as well as the cluster-specific S41 family peptidase phomP1 and the oligopeptidase phomG to produce 10 identical copies of the hexapeptide Tyr-Val-Ile-Pro-Ile-Asp. After being excised from the precursor peptide, the core peptides are cyclized and modified post-translationally by enzymes encoded within the gene cluster. The timing and order of proteolysis of the phomA precursor and PTMs are still unknown. Two tyrosinase-like enzymes, phomQ1 and phomQ2, catalyze the chlorination and hydroxylation of Tyr, respectively. PhomYb, is proposed to be involved in the construction of the macrocyclic structure. The other 4 ustYa family proteins may be involved in PTMs that generate the unique structure of phomopsin A. PhomYa is required for the hydroxylation of C-beta of Tyr. PhomYc, phomYd, and phomYe are responsible for the biosynthesis of 2,3-dehydroisoleucine (dIle), 2,3-dehydroaspartic acid (dAsp), and 3,4-dehydroproline (dPro), respectively. While dIle formation by phomYc is indispensable for the installation of dAsp by phomYd, the order of the other PTMs have not been elucidated yet. Most of the biosynthetic enzymes likely have broad substrate specificity, and thus, there might be a metabolic grid from a precursor to phomopsin A. The enzyme(s) responsible for the biosynthesis of 3,4-dehydrovaline (dVal) have also not been identified yet. Finally, phomM acts as an S-adenosylmethionine-dependent alpha-N-methyltransferase that catalyzes two successive N-methylation reactions, converting N-desmethyl-phomopsin A to phomopsin A and phomopsin A further to an N,N-dimethylated congener called phomopsin E. The sequence is that of Phomopsin biosynthesis cluster protein D from Diaporthe leptostromiformis (Lupinosis disease fungus).